We begin with the raw amino-acid sequence, 320 residues long: 1-aminocyclopropane-1-carboxylate oxidase (320 aa).

Positions Pro156–Pro256 constitute a Fe2OG dioxygenase domain. Fe cation is bound by residues His180, Asp182, and His237.

It belongs to the iron/ascorbate-dependent oxidoreductase family. Requires Fe cation as cofactor.

It catalyses the reaction 1-aminocyclopropane-1-carboxylate + L-ascorbate + O2 = ethene + L-dehydroascorbate + hydrogen cyanide + CO2 + 2 H2O. It functions in the pathway alkene biosynthesis; ethylene biosynthesis via S-adenosyl-L-methionine; ethylene from S-adenosyl-L-methionine: step 2/2. This chain is 1-aminocyclopropane-1-carboxylate oxidase (ACO), found in Brassica juncea (Indian mustard).